A 463-amino-acid chain; its full sequence is Ataxin-10 homolog (463 aa).

It belongs to the ataxin-10 family.

It is found in the cytoplasm. In terms of biological role, may play a role in the regulation of cytokinesis. The sequence is that of Ataxin-10 homolog (CTR86) from Candida albicans (strain SC5314 / ATCC MYA-2876) (Yeast).